Consider the following 117-residue polypeptide: Transcription elongation factor A protein-like 8 (117 aa).

The disordered stretch occupies residues 1 to 81; sequence MQKSCDENEG…PEEVIRGVDE (81 aa). A compositionally biased stretch (basic and acidic residues) spans 41-81; it reads NVREETDGSLRGEPAEPSPEPKEDTPARHLNPEEVIRGVDE. Residues 73 to 100 are a coiled coil; that stretch reads EEVIRGVDELERLREEIRRVRNKFVLMH.

The protein belongs to the TFS-II family. TFA subfamily. In terms of tissue distribution, highly expressed in kidney. Moderately expressed in heart and lung. Low expression in brain and liver. Expression is up-regulated in nephrectomized kidney.

Its subcellular location is the nucleus. In terms of biological role, may be involved in transcriptional regulation. The polypeptide is Transcription elongation factor A protein-like 8 (Tceal8) (Rattus norvegicus (Rat)).